The primary structure comprises 355 residues: MIEIDGSYGEGGGQVVRTAVALSAVTGKDVKVTNIRKNRPNPGLKQQHLKALETAARICEARVSGLFPGSSELFFSPVEIKGGKYEVDIGTAGSITLLLQSLMPALPFAKEKVKLTIKGGTDVAWSPTIDYLQHVTLRALEQLGYAGIVTLKKRGYYPRGGGEVSAVFEPCKLRSFHFRRVKENRRTGEARREEETRNEGRNQNQRIEIQGISHASNLPAHVPARQAEAAESLLLEAGYGSRTKIQSFELLSTGSGITLWSGYCGGSALGKKGLPAEKVGRRAAEEIILELSSKAPVDVHLADQLIPYMALAGNSSYTVRELTLHAATNIWVTEQFLDVKFRIEEKEGLFEVSVD.

ATP is bound by residues Gln-100 and 300 to 304 (HLADQ). His-325 functions as the Tele-AMP-histidine intermediate in the catalytic mechanism.

It belongs to the RNA 3'-terminal cyclase family. Type 1 subfamily.

It localises to the cytoplasm. The enzyme catalyses a 3'-end 3'-phospho-ribonucleotide-RNA + ATP = a 3'-end 2',3'-cyclophospho-ribonucleotide-RNA + AMP + diphosphate. Its function is as follows. Catalyzes the conversion of 3'-phosphate to a 2',3'-cyclic phosphodiester at the end of RNA. The mechanism of action of the enzyme occurs in 3 steps: (A) adenylation of the enzyme by ATP; (B) transfer of adenylate to an RNA-N3'P to produce RNA-N3'PP5'A; (C) and attack of the adjacent 2'-hydroxyl on the 3'-phosphorus in the diester linkage to produce the cyclic end product. The biological role of this enzyme is unknown but it is likely to function in some aspects of cellular RNA processing. This is RNA 3'-terminal phosphate cyclase from Methanosarcina acetivorans (strain ATCC 35395 / DSM 2834 / JCM 12185 / C2A).